Consider the following 614-residue polypeptide: Baeyer-Villiger monooxygenase peniC (614 aa).

FAD contacts are provided by residues glutamate 99, 107–110, aspartate 119, and tyrosine 125; that span reads TWHW. NADP(+) contacts are provided by residues 255-261, 278-279, and 398-399; these read TGASGVQ, RT, and KR.

Belongs to the FAD-binding monooxygenase family. Requires FAD as cofactor.

The catalysed reaction is gamma-lactone-2-keto[5.5.5.5]fenestrane + NADPH + O2 + H(+) = penifulvin A + NADP(+) + H2O. It functions in the pathway secondary metabolite biosynthesis; terpenoid biosynthesis. In terms of biological role, baeyer-Villiger monooxygenase; part of the gene cluster that mediates the biosynthesis of penifulvin A, a potent insecticidal sesquiterpene that features a [5.5.5.6]dioxafenestrane ring. Within the pathway, peniC is responsible for the final regioselective Baeyer-Villiger oxidation of gamma-lactone-2-keto[5.5.5.5]fenestran between C1 and C2 to form the delta-lactone moiety of penifulvin A. The first step of the pathway is performed by the sesquiterpene cyclase peniA that generates the angular triquinane scaffold silphinene via cyclization of the linear farnesyl pyrophosphate (FPP). The cytochrome P450 monooxygenase peniB and the flavin-dependent monooxygenase peniC then catalyze a series of oxidation reactions to transform silphinene into penifulvin A. The protein is Baeyer-Villiger monooxygenase peniC of Penicillium patulum (Penicillium griseofulvum).